Reading from the N-terminus, the 320-residue chain is o-succinylbenzoate synthase (320 aa).

The active-site Proton donor is the Lys-133. Mg(2+) is bound by residues Asp-161, Glu-190, and Asp-213. Lys-235 functions as the Proton acceptor in the catalytic mechanism.

It belongs to the mandelate racemase/muconate lactonizing enzyme family. MenC type 1 subfamily. Requires a divalent metal cation as cofactor.

The enzyme catalyses (1R,6R)-6-hydroxy-2-succinyl-cyclohexa-2,4-diene-1-carboxylate = 2-succinylbenzoate + H2O. It participates in quinol/quinone metabolism; 1,4-dihydroxy-2-naphthoate biosynthesis; 1,4-dihydroxy-2-naphthoate from chorismate: step 4/7. Its pathway is quinol/quinone metabolism; menaquinone biosynthesis. Its function is as follows. Converts 2-succinyl-6-hydroxy-2,4-cyclohexadiene-1-carboxylate (SHCHC) to 2-succinylbenzoate (OSB). The protein is o-succinylbenzoate synthase of Escherichia coli O6:H1 (strain CFT073 / ATCC 700928 / UPEC).